The following is a 210-amino-acid chain: Large ribosomal subunit protein bL25 (210 aa).

The segment at 191-210 (KPAPKAAETDEDGEEAASEE) is disordered. Acidic residues predominate over residues 199 to 210 (TDEDGEEAASEE).

The protein belongs to the bacterial ribosomal protein bL25 family. CTC subfamily. In terms of assembly, part of the 50S ribosomal subunit; part of the 5S rRNA/L5/L18/L25 subcomplex. Contacts the 5S rRNA. Binds to the 5S rRNA independently of L5 and L18.

Functionally, this is one of the proteins that binds to the 5S RNA in the ribosome where it forms part of the central protuberance. The protein is Large ribosomal subunit protein bL25 of Alteromonas mediterranea (strain DSM 17117 / CIP 110805 / LMG 28347 / Deep ecotype).